The chain runs to 472 residues: Levansucrase (472 aa).

An N-terminal signal peptide occupies residues 1 to 29 (MNIKKIVKQATVLTFTTALLAGGATQAFA). 3 residues coordinate sucrose: Trp-85, Asp-86, and Ser-164. The active-site Nucleophile is Asp-86. Asp-241 serves as a coordination point for Ca(2+). Sucrose is bound by residues Arg-246 and Asp-247. Ca(2+)-binding residues include Gln-272, Leu-308, Asn-310, and Asp-339. Residue Glu-340 participates in sucrose binding. Glu-342 serves as the catalytic Proton donor/acceptor. A sucrose-binding site is contributed by Arg-360.

The protein belongs to the glycosyl hydrolase 68 family.

It localises to the secreted. The catalysed reaction is [6)-beta-D-fructofuranosyl-(2-&gt;](n) alpha-D-glucopyranoside + sucrose = [6)-beta-D-fructofuranosyl-(2-&gt;](n+1) alpha-D-glucopyranoside + D-glucose. With respect to regulation, ca(2+) may play an important structural role and promote stability of levansucrase. In terms of biological role, catalyzes the synthesis of levan, a fructose polymer, by transferring the fructosyl moiety from sucrose to a growing acceptor molecule. Also displays sucrose hydrolase activity. This is Levansucrase from Bacillus amyloliquefaciens (Bacillus velezensis).